The primary structure comprises 716 residues: Probable basic-leucine zipper transcription factor O (716 aa).

Positions 20–142 form a coiled coil; sequence LLDDFSQLQQ…YQQRQQQYQD (123 aa). Positions 173–233 are disordered; that stretch reads SINYNMNNNN…NNKTTDNINN (61 aa). The bZIP domain maps to 381–444; that stretch reads KSTESIKKMN…SVDLMKPSND (64 aa). Residues 387-403 are basic motif; the sequence is KKMNQNKASRNYRQKKK. The segment at 406–413 is leucine-zipper; that stretch reads IKEIEDKL.

Belongs to the bZIP family.

The protein localises to the nucleus. Functionally, probable transcriptional regulator. The chain is Probable basic-leucine zipper transcription factor O (bzpO) from Dictyostelium discoideum (Social amoeba).